We begin with the raw amino-acid sequence, 97 residues long: Small ribosomal subunit protein bS20 (97 aa).

The protein belongs to the bacterial ribosomal protein bS20 family.

Binds directly to 16S ribosomal RNA. The sequence is that of Small ribosomal subunit protein bS20 from Prochlorococcus marinus (strain AS9601).